Reading from the N-terminus, the 350-residue chain is Beta-hexosaminidase (350 aa).

Residues D73, R81, R148, and 178–179 (KH) each bind substrate. The Proton donor/acceptor role is filled by H191. Residue D262 is the Nucleophile of the active site.

Belongs to the glycosyl hydrolase 3 family. NagZ subfamily.

It is found in the cytoplasm. It catalyses the reaction Hydrolysis of terminal non-reducing N-acetyl-D-hexosamine residues in N-acetyl-beta-D-hexosaminides.. The protein operates within cell wall biogenesis; peptidoglycan recycling. Functionally, plays a role in peptidoglycan recycling by cleaving the terminal beta-1,4-linked N-acetylglucosamine (GlcNAc) from peptide-linked peptidoglycan fragments, giving rise to free GlcNAc, anhydro-N-acetylmuramic acid and anhydro-N-acetylmuramic acid-linked peptides. The polypeptide is Beta-hexosaminidase (Bordetella avium (strain 197N)).